The following is a 356-amino-acid chain: Phospho-N-acetylmuramoyl-pentapeptide-transferase (356 aa).

10 helical membrane passes run 25-45, 70-90, 93-113, 138-158, 164-184, 195-215, 235-255, 258-278, 284-304, and 333-353; these read TVAA…SIIA, GTPT…AFLW, LSNI…MIGF, FLIA…GLAL, YFIN…VGTG, GLAI…AYLS, LAVL…FNAP, AIFM…IVAV, IVLA…VIQV, and QVVI…LSTL.

Belongs to the glycosyltransferase 4 family. MraY subfamily. Mg(2+) serves as cofactor.

It is found in the cell inner membrane. It carries out the reaction UDP-N-acetyl-alpha-D-muramoyl-L-alanyl-gamma-D-glutamyl-meso-2,6-diaminopimeloyl-D-alanyl-D-alanine + di-trans,octa-cis-undecaprenyl phosphate = di-trans,octa-cis-undecaprenyl diphospho-N-acetyl-alpha-D-muramoyl-L-alanyl-D-glutamyl-meso-2,6-diaminopimeloyl-D-alanyl-D-alanine + UMP. It participates in cell wall biogenesis; peptidoglycan biosynthesis. Its function is as follows. Catalyzes the initial step of the lipid cycle reactions in the biosynthesis of the cell wall peptidoglycan: transfers peptidoglycan precursor phospho-MurNAc-pentapeptide from UDP-MurNAc-pentapeptide onto the lipid carrier undecaprenyl phosphate, yielding undecaprenyl-pyrophosphoryl-MurNAc-pentapeptide, known as lipid I. This chain is Phospho-N-acetylmuramoyl-pentapeptide-transferase, found in Bartonella quintana (strain Toulouse) (Rochalimaea quintana).